A 144-amino-acid polypeptide reads, in one-letter code: Large ribosomal subunit protein uL15 (144 aa).

The segment at 1–48 (MQLNNLKPAAGSKHAKRRVGRGIGSGLGKTAGRGHKGQKSRSGGFHKV) is disordered. Over residues 21–31 (RGIGSGLGKTA) the composition is skewed to gly residues.

This sequence belongs to the universal ribosomal protein uL15 family. Part of the 50S ribosomal subunit.

Functionally, binds to the 23S rRNA. The sequence is that of Large ribosomal subunit protein uL15 from Cupriavidus taiwanensis (strain DSM 17343 / BCRC 17206 / CCUG 44338 / CIP 107171 / LMG 19424 / R1) (Ralstonia taiwanensis (strain LMG 19424)).